Consider the following 1246-residue polypeptide: DNA-directed RNA polymerase subunit beta (1246 aa).

The disordered stretch occupies residues 1171–1246; it reads IDDDAGEMSL…EFDGYNDFKA (76 aa). 2 stretches are compositionally biased toward acidic residues: residues 1202–1223 and 1230–1240; these read DEEE…EDFE and EYAEDDDEFDG.

This sequence belongs to the RNA polymerase beta chain family. As to quaternary structure, the RNAP catalytic core consists of 2 alpha, 1 beta, 1 beta' and 1 omega subunit. When a sigma factor is associated with the core the holoenzyme is formed, which can initiate transcription.

It catalyses the reaction RNA(n) + a ribonucleoside 5'-triphosphate = RNA(n+1) + diphosphate. Its function is as follows. DNA-dependent RNA polymerase catalyzes the transcription of DNA into RNA using the four ribonucleoside triphosphates as substrates. This chain is DNA-directed RNA polymerase subunit beta, found in Alkaliphilus metalliredigens (strain QYMF).